Here is a 457-residue protein sequence, read N- to C-terminus: Bifunctional protein GlmU (457 aa).

The segment at 1–230 (MSKRYAVVLA…FEESLGVNDR (230 aa)) is pyrophosphorylase. UDP-N-acetyl-alpha-D-glucosamine is bound by residues 9 to 12 (LAAG), Lys23, Gln73, and 78 to 79 (GT). Asp103 is a binding site for Mg(2+). Positions 140, 155, 170, and 228 each coordinate UDP-N-acetyl-alpha-D-glucosamine. Asn228 is a binding site for Mg(2+). The linker stretch occupies residues 231-251 (IALAEASKLMQRRINENHMRN). The tract at residues 252–457 (GVTLVNPENT…GYAKHLNHGK (206 aa)) is N-acetyltransferase. Residues Arg333 and Lys351 each coordinate UDP-N-acetyl-alpha-D-glucosamine. His363 acts as the Proton acceptor in catalysis. The UDP-N-acetyl-alpha-D-glucosamine site is built by Tyr366 and Asn377. Acetyl-CoA contacts are provided by residues 386-387 (NY), Ala423, and Arg440.

The protein in the N-terminal section; belongs to the N-acetylglucosamine-1-phosphate uridyltransferase family. This sequence in the C-terminal section; belongs to the transferase hexapeptide repeat family. As to quaternary structure, homotrimer. Requires Mg(2+) as cofactor.

It localises to the cytoplasm. It catalyses the reaction alpha-D-glucosamine 1-phosphate + acetyl-CoA = N-acetyl-alpha-D-glucosamine 1-phosphate + CoA + H(+). The catalysed reaction is N-acetyl-alpha-D-glucosamine 1-phosphate + UTP + H(+) = UDP-N-acetyl-alpha-D-glucosamine + diphosphate. It participates in nucleotide-sugar biosynthesis; UDP-N-acetyl-alpha-D-glucosamine biosynthesis; N-acetyl-alpha-D-glucosamine 1-phosphate from alpha-D-glucosamine 6-phosphate (route II): step 2/2. It functions in the pathway nucleotide-sugar biosynthesis; UDP-N-acetyl-alpha-D-glucosamine biosynthesis; UDP-N-acetyl-alpha-D-glucosamine from N-acetyl-alpha-D-glucosamine 1-phosphate: step 1/1. The protein operates within bacterial outer membrane biogenesis; LPS lipid A biosynthesis. Its function is as follows. Catalyzes the last two sequential reactions in the de novo biosynthetic pathway for UDP-N-acetylglucosamine (UDP-GlcNAc). The C-terminal domain catalyzes the transfer of acetyl group from acetyl coenzyme A to glucosamine-1-phosphate (GlcN-1-P) to produce N-acetylglucosamine-1-phosphate (GlcNAc-1-P), which is converted into UDP-GlcNAc by the transfer of uridine 5-monophosphate (from uridine 5-triphosphate), a reaction catalyzed by the N-terminal domain. This is Bifunctional protein GlmU from Listeria innocua serovar 6a (strain ATCC BAA-680 / CLIP 11262).